The following is a 179-amino-acid chain: Large ribosomal subunit protein uL6c (179 aa).

It belongs to the universal ribosomal protein uL6 family. As to quaternary structure, part of the 50S ribosomal subunit.

It localises to the plastid. The protein resides in the chloroplast. Functionally, binds 23S rRNA. In Trieres chinensis (Marine centric diatom), this protein is Large ribosomal subunit protein uL6c (rpl6).